Reading from the N-terminus, the 253-residue chain is 4-phosphopantoate--beta-alanine ligase (253 aa).

ATP is bound by residues Arg-17, Arg-39, 179 to 181 (DLN), 185 to 186 (RT), and 197 to 198 (NL).

The protein belongs to the archaeal phosphopantothenate synthetase family. As to quaternary structure, homodimer.

The enzyme catalyses (R)-4-phosphopantoate + beta-alanine + ATP = (R)-4'-phosphopantothenate + AMP + diphosphate + H(+). The protein operates within cofactor biosynthesis; coenzyme A biosynthesis. Catalyzes the condensation of (R)-4-phosphopantoate and beta-alanine to 4'-phosphopantothenate in the CoA biosynthesis pathway. This is 4-phosphopantoate--beta-alanine ligase from Methanosarcina mazei (strain ATCC BAA-159 / DSM 3647 / Goe1 / Go1 / JCM 11833 / OCM 88) (Methanosarcina frisia).